The sequence spans 241 residues: Eukaryotic translation initiation factor 3 subunit J (241 aa).

The segment at 1–97 (MEEDWEQLSE…EEEDMTPEQK (97 aa)) is disordered. The segment covering 28-45 (GEDEEEEVKDSWEDEDEL) has biased composition (acidic residues). Residues 31–119 (EEEEVKDSWE…ESDLKNALDT (89 aa)) are a coiled coil. Composition is skewed to basic and acidic residues over residues 46-58 (EEKKDEEKVETPK) and 69-87 (IADKEKLKQEEAERRRLEK).

Belongs to the eIF-3 subunit J family. As to quaternary structure, component of the eukaryotic translation initiation factor 3 (eIF-3) complex.

The protein localises to the cytoplasm. Its function is as follows. Component of the eukaryotic translation initiation factor 3 (eIF-3) complex, which is involved in protein synthesis of a specialized repertoire of mRNAs and, together with other initiation factors, stimulates binding of mRNA and methionyl-tRNAi to the 40S ribosome. The eIF-3 complex specifically targets and initiates translation of a subset of mRNAs involved in cell proliferation. This is Eukaryotic translation initiation factor 3 subunit J from Aedes aegypti (Yellowfever mosquito).